Here is a 350-residue protein sequence, read N- to C-terminus: Ribosomal RNA small subunit methyltransferase C (350 aa).

This sequence belongs to the methyltransferase superfamily. RsmC family. In terms of assembly, monomer.

It localises to the cytoplasm. The catalysed reaction is guanosine(1207) in 16S rRNA + S-adenosyl-L-methionine = N(2)-methylguanosine(1207) in 16S rRNA + S-adenosyl-L-homocysteine + H(+). Specifically methylates the guanine in position 1207 of 16S rRNA in the 30S particle. This chain is Ribosomal RNA small subunit methyltransferase C, found in Sodalis glossinidius (strain morsitans).